The sequence spans 279 residues: Biotin synthase (279 aa).

The 227-residue stretch at 1 to 227 (MKVYLCAISN…NAMIMVAGGR (227 aa)) folds into the Radical SAM core domain. The [4Fe-4S] cluster site is built by Cys16, Cys20, and Cys23. The [2Fe-2S] cluster site is built by Cys60, Cys95, and Cys153.

This sequence belongs to the radical SAM superfamily. Biotin synthase family. Homodimer. [4Fe-4S] cluster is required as a cofactor. [2Fe-2S] cluster serves as cofactor.

It carries out the reaction (4R,5S)-dethiobiotin + (sulfur carrier)-SH + 2 reduced [2Fe-2S]-[ferredoxin] + 2 S-adenosyl-L-methionine = (sulfur carrier)-H + biotin + 2 5'-deoxyadenosine + 2 L-methionine + 2 oxidized [2Fe-2S]-[ferredoxin]. It participates in cofactor biosynthesis; biotin biosynthesis; biotin from 7,8-diaminononanoate: step 2/2. Functionally, catalyzes the conversion of dethiobiotin (DTB) to biotin by the insertion of a sulfur atom into dethiobiotin via a radical-based mechanism. The sequence is that of Biotin synthase from Nitratiruptor sp. (strain SB155-2).